The primary structure comprises 635 residues: 1-deoxy-D-xylulose-5-phosphate synthase (635 aa).

Thiamine diphosphate-binding positions include His72 and 113–115 (GHA). Asp144 contacts Mg(2+). Thiamine diphosphate is bound by residues 145 to 146 (GA), Asn174, Tyr286, and Glu369. Position 174 (Asn174) interacts with Mg(2+).

It belongs to the transketolase family. DXPS subfamily. In terms of assembly, homodimer. Requires Mg(2+) as cofactor. The cofactor is thiamine diphosphate.

The enzyme catalyses D-glyceraldehyde 3-phosphate + pyruvate + H(+) = 1-deoxy-D-xylulose 5-phosphate + CO2. It functions in the pathway metabolic intermediate biosynthesis; 1-deoxy-D-xylulose 5-phosphate biosynthesis; 1-deoxy-D-xylulose 5-phosphate from D-glyceraldehyde 3-phosphate and pyruvate: step 1/1. In terms of biological role, catalyzes the acyloin condensation reaction between C atoms 2 and 3 of pyruvate and glyceraldehyde 3-phosphate to yield 1-deoxy-D-xylulose-5-phosphate (DXP). The protein is 1-deoxy-D-xylulose-5-phosphate synthase of Acaryochloris marina (strain MBIC 11017).